The chain runs to 328 residues: Phosphoserine phosphatase (328 aa).

D113 (nucleophile) is an active-site residue. Mg(2+) is bound by residues D113 and D115. The active-site Proton donor is the D115. Substrate-binding positions include E122, R158, 201 to 202 (SG), and K246. D269 is a binding site for Mg(2+). N272 is a binding site for substrate.

Belongs to the HAD-like hydrolase superfamily. SerB family. Mg(2+) is required as a cofactor.

It carries out the reaction O-phospho-L-serine + H2O = L-serine + phosphate. The catalysed reaction is O-phospho-D-serine + H2O = D-serine + phosphate. Its pathway is amino-acid biosynthesis; L-serine biosynthesis; L-serine from 3-phospho-D-glycerate: step 3/3. This is Phosphoserine phosphatase from Vibrio cholerae serotype O1 (strain ATCC 39315 / El Tor Inaba N16961).